We begin with the raw amino-acid sequence, 219 residues long: Protein-L-isoaspartate O-methyltransferase (219 aa).

S66 is an active-site residue.

It belongs to the methyltransferase superfamily. L-isoaspartyl/D-aspartyl protein methyltransferase family.

It is found in the cytoplasm. The catalysed reaction is [protein]-L-isoaspartate + S-adenosyl-L-methionine = [protein]-L-isoaspartate alpha-methyl ester + S-adenosyl-L-homocysteine. Its function is as follows. Catalyzes the methyl esterification of L-isoaspartyl residues in peptides and proteins that result from spontaneous decomposition of normal L-aspartyl and L-asparaginyl residues. It plays a role in the repair and/or degradation of damaged proteins. The sequence is that of Protein-L-isoaspartate O-methyltransferase from Xanthobacter autotrophicus (strain ATCC BAA-1158 / Py2).